Reading from the N-terminus, the 289-residue chain is UPF0173 metal-dependent hydrolase H16_A2129 (289 aa).

This sequence belongs to the UPF0173 family.

The sequence is that of UPF0173 metal-dependent hydrolase H16_A2129 from Cupriavidus necator (strain ATCC 17699 / DSM 428 / KCTC 22496 / NCIMB 10442 / H16 / Stanier 337) (Ralstonia eutropha).